Reading from the N-terminus, the 94-residue chain is C-C motif chemokine 26 (94 aa).

A signal peptide spans 1 to 23; that stretch reads MKSFPVAFLVLLIFILSVHRGVT. Disulfide bonds link C33–C57 and C34–C73.

The protein belongs to the intercrine beta (chemokine CC) family. As to quaternary structure, monomer.

Its subcellular location is the secreted. In terms of biological role, chemoattractant for eosinophils and basophils. Acts as a ligand for C-C chemokine receptor CCR3 which triggers Ca(2+) mobilization in eosinophils. Also acts as a ligand for CX3C chemokine receptor CX3CR1, inducing cell chemotaxis. This is C-C motif chemokine 26 from Canis lupus familiaris (Dog).